The sequence spans 420 residues: Protein BDLF2 (420 aa).

Disordered stretches follow at residues 1–21 (MVDE…SREE) and 64–129 (AAAV…GGQR). At 1–184 (MVDEQVAVEH…AETLAEPPRC (184 aa)) the chain is on the intravirion side. Over residues 90-108 (TKTNTQDQNQNQTTRTRTN) the composition is skewed to low complexity. The helical; Signal-anchor for type II membrane protein transmembrane segment at 185-205 (FMLSFVFIYYCCYLAFLALLA) threads the bilayer. Topologically, residues 206 to 420 (FGFNPLFLPS…LEEVMYVMVQ (215 aa)) are virion surface. N-linked (GlcNAc...) asparagine; by host glycans are attached at residues asparagine 258, asparagine 264, asparagine 300, asparagine 304, asparagine 371, and asparagine 384.

It belongs to the herpesviridae BDLF2 family. Interacts with BMRF2.

The protein localises to the virion membrane. Its function is as follows. Rearranges cellular actin to increase intercellular contacts and thereby promote virus cell-to-cell spreading. Induce the outgrowth of long, branched plasma membrane fronds to create intercellular network for virion traffic. The fronds are actin based and RhoA-dependent. The chain is Protein BDLF2 from Homo sapiens (Human).